The primary structure comprises 168 residues: Photosystem I assembly protein Ycf3 (168 aa).

3 TPR repeats span residues alanine 35–proline 68, serine 72–leucine 105, and glycine 120–asparagine 153.

The protein belongs to the Ycf3 family.

It is found in the plastid. Its subcellular location is the chloroplast thylakoid membrane. Essential for the assembly of the photosystem I (PSI) complex. May act as a chaperone-like factor to guide the assembly of the PSI subunits. This is Photosystem I assembly protein Ycf3 from Pelargonium hortorum (Common geranium).